The following is a 130-amino-acid chain: Small ribosomal subunit protein uS9 (130 aa).

Residues 109 to 130 (RKKERKKYGQPGARAKFQYSKR) form a disordered region.

Belongs to the universal ribosomal protein uS9 family.

This chain is Small ribosomal subunit protein uS9, found in Maridesulfovibrio salexigens (strain ATCC 14822 / DSM 2638 / NCIMB 8403 / VKM B-1763) (Desulfovibrio salexigens).